The sequence spans 320 residues: Cytochrome f (320 aa).

A signal peptide spans 1 to 35; sequence MNFFTHKKNNFGSFVTIFSFLVALGVTNLTPAAEA. Positions 36, 56, 59, and 60 each coordinate heme. The helical transmembrane segment at 286–306 threads the bilayer; sequence IQGLLVFFATVLFAQVLLVLK.

This sequence belongs to the cytochrome f family. The 4 large subunits of the cytochrome b6-f complex are cytochrome b6, subunit IV (17 kDa polypeptide, petD), cytochrome f and the Rieske protein, while the 4 small subunits are PetG, PetL, PetM and PetN. The complex functions as a dimer. The cofactor is heme.

It localises to the plastid. The protein resides in the chloroplast thylakoid membrane. In terms of biological role, component of the cytochrome b6-f complex, which mediates electron transfer between photosystem II (PSII) and photosystem I (PSI), cyclic electron flow around PSI, and state transitions. This chain is Cytochrome f, found in Tetradesmus obliquus (Green alga).